A 449-amino-acid chain; its full sequence is Heterogeneous nuclear ribonucleoprotein H (449 aa).

M1 carries the N-acetylmethionine; in Heterogeneous nuclear ribonucleoprotein H; alternate modification. Residue M2 is modified to N-acetylmethionine; in Heterogeneous nuclear ribonucleoprotein H, N-terminally processed. An RRM 1 domain is found at 11–90; it reads FVVKVRGLPW…RYVEVFKSNN (80 aa). Phosphoserine is present on S23. A Glycyl lysine isopeptide (Lys-Gly) (interchain with G-Cter in SUMO2) cross-link involves residue K35. Residues S54 and S63 each carry the phosphoserine modification. Residues K87 and K98 each participate in a glycyl lysine isopeptide (Lys-Gly) (interchain with G-Cter in SUMO2) cross-link. Residues 111–188 enclose the RRM 2 domain; that stretch reads GFVRLRGLPF…RYIEIFKSSR (78 aa). R233 carries the post-translational modification Dimethylated arginine; alternate. R233 carries the post-translational modification Omega-N-methylarginine; alternate. Residues 234 to 249 form a 1-1 repeat; that stretch reads GAYGGGYGGYDDYNGY. Residues 234–433 are 2 X 16 AA Gly-rich approximate repeats; it reads GAYGGGYGGY…YGGQSSMSGY (200 aa). Phosphotyrosine is present on Y246. One can recognise an RRM 3 domain in the interval 289–364; that stretch reads HCVHMRGLPY…RYVELFLNST (76 aa). A Phosphoserine modification is found at S310. 3 tandem repeats follow at residues 354 to 372, 374 to 392, and 418 to 433. Residues 354–392 form a 2 X 19 AA perfect repeats region; the sequence is HRYVELFLNSTAGASGGAYEHRYVELFLNSTAGASGGAY.

In terms of assembly, part of a ternary complex containing FUBP2, PTBP1, PTBP2 and HNRNPH1. Identified in the spliceosome C complex. Interacts with IGF2BP1. Interacts with CUGBP1; the interaction is RNA-dependent. Interacts with MBNL1; the interaction in RNA-independent. In terms of tissue distribution, expressed ubiquitously.

It is found in the nucleus. The protein resides in the nucleoplasm. Its function is as follows. This protein is a component of the heterogeneous nuclear ribonucleoprotein (hnRNP) complexes which provide the substrate for the processing events that pre-mRNAs undergo before becoming functional, translatable mRNAs in the cytoplasm. Mediates pre-mRNA alternative splicing regulation. Inhibits, together with CUGBP1, insulin receptor (IR) pre-mRNA exon 11 inclusion in myoblast. Binds to the IR RNA. Binds poly(RG). This is Heterogeneous nuclear ribonucleoprotein H (HNRNPH1) from Homo sapiens (Human).